Here is a 307-residue protein sequence, read N- to C-terminus: Homoserine kinase (307 aa).

91-101 (PLARGLGSSAA) contributes to the ATP binding site.

Belongs to the GHMP kinase family. Homoserine kinase subfamily.

It localises to the cytoplasm. The enzyme catalyses L-homoserine + ATP = O-phospho-L-homoserine + ADP + H(+). It functions in the pathway amino-acid biosynthesis; L-threonine biosynthesis; L-threonine from L-aspartate: step 4/5. In terms of biological role, catalyzes the ATP-dependent phosphorylation of L-homoserine to L-homoserine phosphate. The polypeptide is Homoserine kinase (Deinococcus radiodurans (strain ATCC 13939 / DSM 20539 / JCM 16871 / CCUG 27074 / LMG 4051 / NBRC 15346 / NCIMB 9279 / VKM B-1422 / R1)).